Consider the following 486-residue polypeptide: Glycogen synthase 2 (486 aa).

Residue Lys15 participates in ADP-alpha-D-glucose binding.

It belongs to the glycosyltransferase 1 family. Bacterial/plant glycogen synthase subfamily.

It catalyses the reaction [(1-&gt;4)-alpha-D-glucosyl](n) + ADP-alpha-D-glucose = [(1-&gt;4)-alpha-D-glucosyl](n+1) + ADP + H(+). It functions in the pathway glycan biosynthesis; glycogen biosynthesis. Functionally, synthesizes alpha-1,4-glucan chains using ADP-glucose. This chain is Glycogen synthase 2 (glgA2), found in Rhizobium meliloti (strain 1021) (Ensifer meliloti).